We begin with the raw amino-acid sequence, 25 residues long: U11-ctenitoxin-Co1b (25 aa).

2 cysteine pairs are disulfide-bonded: Cys-4–Cys-18 and Cys-11–Cys-22.

As to quaternary structure, monomer. As to expression, expressed by the venom gland.

The protein localises to the secreted. Neurotoxin. This Ctenus ornatus (Brazilian spider) protein is U11-ctenitoxin-Co1b.